An 861-amino-acid polypeptide reads, in one-letter code: Xylan 1,4-beta-xylosidase (861 aa).

A signal peptide spans 1 to 19 (MKYQLFLSLALCVGLGASA). Catalysis depends on Asp-269, which acts as the Nucleophile. Positions 458–600 (DGKKGLKGTF…DYQETIAQLK (143 aa)) constitute a PA14 domain. The Proton donor/acceptor role is filled by Glu-616.

Belongs to the glycosyl hydrolase 3 family. As to quaternary structure, exists as a large polymeric species, presumably as a homononamer.

It catalyses the reaction Hydrolysis of (1-&gt;4)-beta-D-xylans, to remove successive D-xylose residues from the non-reducing termini.. It carries out the reaction Hydrolysis of terminal non-reducing alpha-L-arabinofuranoside residues in alpha-L-arabinosides.. It functions in the pathway glycan degradation; xylan degradation. Involved in degradation of plant cell wall polysaccharides. Has beta-xylosidase activity via its capacity to hydrolyze glycosidic linkages of beta-1,4-xylo-oligosaccharides of various lengths (X2 to X6), releasing xylose monomers. To a much lesser extent, also has alpha-L-arabinofuranosidase activity. Does not possess beta-D-glucosidase activity. Acts synergistically with Xyn10D-Fae1A to increase the release of xylose from xylan. This Xylanibacter ruminicola (strain ATCC 19189 / DSM 19721 / CIP 105475 / JCM 8958 / 23) (Prevotella ruminicola) protein is Xylan 1,4-beta-xylosidase.